Reading from the N-terminus, the 617-residue chain is COMPASS component cclA (617 aa).

Composition is skewed to low complexity over residues 1–19 (MASIQPAGSSAPSSNINSP) and 40–50 (SSPAPASNASA). The interval 1–89 (MASIQPAGSS…AKKRATAVQN (89 aa)) is disordered. A compositionally biased stretch (basic residues) spans 57 to 69 (SKRNKRDSRKKRE). The 224-residue stretch at 157–380 (IADTSFPHIK…YAFNLKETPT (224 aa)) folds into the B30.2/SPRY domain. Residues 595-617 (TPNTEEPAARPENITVGHDVEMS) are disordered.

Belongs to the cclA family. As to quaternary structure, component of the COMPASS complex.

Its subcellular location is the nucleus. The protein resides in the chromosome. It localises to the telomere. Functionally, component of the COMPASS (Set1C) complex that specifically mono-, di- and trimethylates histone H3 to form H3K4me1/2/3, which subsequently plays a role in telomere length maintenance and transcription elongation regulation. Controls the production of several secondary metabolites, including astellolides. This chain is COMPASS component cclA, found in Aspergillus oryzae (strain ATCC 42149 / RIB 40) (Yellow koji mold).